We begin with the raw amino-acid sequence, 49 residues long: Single-stranded DNA-binding protein (49 aa).

Homodimer in the absence of DNA, monomer when binding DNA.

Binds preferentially to single-stranded DNA and therefore, destabilizes double-stranded DNA. It is involved in DNA replication, repair and recombination. Binds ss-DNA as the replication fork advances and stimulates the replisome processivity and accuracy. This is Single-stranded DNA-binding protein (32) from Enterobacteria phage RB9 (Bacteriophage RB9).